Reading from the N-terminus, the 432-residue chain is D-amino acid dehydrogenase (432 aa).

3 to 17 (VVILGSGVVGVASAW) serves as a coordination point for FAD.

This sequence belongs to the DadA oxidoreductase family. Requires FAD as cofactor.

It catalyses the reaction a D-alpha-amino acid + A + H2O = a 2-oxocarboxylate + AH2 + NH4(+). The protein operates within amino-acid degradation; D-alanine degradation; NH(3) and pyruvate from D-alanine: step 1/1. Its function is as follows. Oxidative deamination of D-amino acids. The polypeptide is D-amino acid dehydrogenase (Klebsiella pneumoniae (strain 342)).